The chain runs to 408 residues: Peptidase T (408 aa).

His-78 provides a ligand contact to Zn(2+). The active site involves Asp-80. Asp-141 contributes to the Zn(2+) binding site. The active-site Proton acceptor is Glu-175. Residues Glu-176, Asp-198, and His-380 each coordinate Zn(2+).

It belongs to the peptidase M20B family. Zn(2+) serves as cofactor.

It localises to the cytoplasm. The catalysed reaction is Release of the N-terminal residue from a tripeptide.. Functionally, cleaves the N-terminal amino acid of tripeptides. The protein is Peptidase T of Clostridium botulinum (strain 657 / Type Ba4).